The primary structure comprises 307 residues: tRNA N(3)-methylcytidine methyltransferase trm140 (307 aa).

S-adenosyl-L-methionine contacts are provided by Trp83, Tyr87, Gly125, Asp150, Asp176, Leu177, and Ile197.

It belongs to the methyltransferase superfamily. METL family.

It carries out the reaction cytidine(32) in tRNA(Thr) + S-adenosyl-L-methionine = N(3)-methylcytidine(32) in tRNA(Thr) + S-adenosyl-L-homocysteine + H(+). Functionally, S-adenosyl-L-methionine-dependent methyltransferase that mediates N(3)-methylcytidine modification of residue 32 of the tRNA anticodon loop of tRNA(Thr). Does not catalyze N(3)-methylcytidine modification of tRNA(Ser). In Schizosaccharomyces pombe (strain 972 / ATCC 24843) (Fission yeast), this protein is tRNA N(3)-methylcytidine methyltransferase trm140.